Consider the following 113-residue polypeptide: T cell receptor alpha variable 12-2 (113 aa).

The first 20 residues, 1 to 20 (MKSLRVLLVILWLQLSWVWS), serve as a signal peptide directing secretion. The region spanning 23 to 113 (KEVEQNSGPL…DSATYLCAVN (91 aa)) is the Ig-like domain. Asn43 carries an N-linked (GlcNAc...) asparagine glycan. The cysteines at positions 44 and 110 are disulfide-linked.

As to quaternary structure, alpha-beta TR is a heterodimer composed of an alpha and beta chain; disulfide-linked. The alpha-beta TR is associated with the transmembrane signaling CD3 coreceptor proteins to form the TR-CD3 (TcR or TCR). The assembly of alpha-beta TR heterodimers with CD3 occurs in the endoplasmic reticulum where a single alpha-beta TR heterodimer associates with one CD3D-CD3E heterodimer, one CD3G-CD3E heterodimer and one CD247 homodimer forming a stable octameric structure. CD3D-CD3E and CD3G-CD3E heterodimers preferentially associate with TR alpha and TR beta chains, respectively. The association of the CD247 homodimer is the last step of TcR assembly in the endoplasmic reticulum and is required for transport to the cell surface.

It localises to the cell membrane. In terms of biological role, v region of the variable domain of T cell receptor (TR) alpha chain that participates in the antigen recognition. Alpha-beta T cell receptors are antigen specific receptors which are essential to the immune response and are present on the cell surface of T lymphocytes. Recognize peptide-major histocompatibility (MH) (pMH) complexes that are displayed by antigen presenting cells (APC), a prerequisite for efficient T cell adaptive immunity against pathogens. Binding of alpha-beta TR to pMH complex initiates TR-CD3 clustering on the cell surface and intracellular activation of LCK that phosphorylates the ITAM motifs of CD3G, CD3D, CD3E and CD247 enabling the recruitment of ZAP70. In turn ZAP70 phosphorylates LAT, which recruits numerous signaling molecules to form the LAT signalosome. The LAT signalosome propagates signal branching to three major signaling pathways, the calcium, the mitogen-activated protein kinase (MAPK) kinase and the nuclear factor NF-kappa-B (NF-kB) pathways, leading to the mobilization of transcription factors that are critical for gene expression and essential for T cell growth and differentiation. The T cell repertoire is generated in the thymus, by V-(D)-J rearrangement. This repertoire is then shaped by intrathymic selection events to generate a peripheral T cell pool of self-MH restricted, non-autoaggressive T cells. Post-thymic interaction of alpha-beta TR with the pMH complexes shapes TR structural and functional avidity. The chain is T cell receptor alpha variable 12-2 from Homo sapiens (Human).